Reading from the N-terminus, the 696-residue chain is D-(-)-3-hydroxybutyrate oligomer hydrolase (696 aa).

Residues M1 to N26 form the signal peptide. S309 acts as the Charge relay system in catalysis.

Belongs to the D-(-)-3-hydroxybutyrate oligomer hydrolase family.

The protein resides in the secreted. The enzyme catalyses (3R)-hydroxybutanoate dimer + H2O = 2 (R)-3-hydroxybutanoate + H(+). Its pathway is lipid metabolism; butanoate metabolism. In terms of biological role, participates in the degradation of poly-3-hydroxybutyrate (PHB). It works downstream of poly(3-hydroxybutyrate) depolymerase, hydrolyzing D(-)-3-hydroxybutyrate oligomers of various length (3HB-oligomers) into 3HB-monomers. This chain is D-(-)-3-hydroxybutyrate oligomer hydrolase, found in Burkholderia vietnamiensis (strain G4 / LMG 22486) (Burkholderia cepacia (strain R1808)).